The following is a 213-amino-acid chain: Calcium-dependent cell adhesion molecule 1 (213 aa).

Tandem repeats lie at residues 1–48, 49–97, 98–146, and 147–194. The tract at residues 1-194 is 4 X approximate tandem repeats; it reads MSVDANKVKF…IKKDETFPKN (194 aa).

It belongs to the Dictyostelium CAD family. In terms of processing, the N-terminus is blocked.

It is found in the cell membrane. In terms of biological role, mediates calcium-dependent cell-cell adhesion during the early stage of development. This is Calcium-dependent cell adhesion molecule 1 (cadA) from Dictyostelium discoideum (Social amoeba).